The chain runs to 930 residues: Urea transporter 2 (930 aa).

The segment covering 1-11 (MSDHHPLKEMS) has biased composition (basic and acidic residues). The interval 1–90 (MSDHHPLKEM…KRRESEVSRR (90 aa)) is disordered. Low complexity-rich tracts occupy residues 12–25 (DSNS…PLSS) and 32–43 (SELSSPTWPSSS). The span at 56–89 (PEEKDLRSSDEDSHIVKIEKPNERNKRRESEVSR) shows a compositional bias: basic and acidic residues. A run of 8 helical transmembrane segments spans residues 145–165 (ISGL…TIAG), 185–205 (AIAS…MAVF), 213–233 (WWLL…SSAL), 242–262 (LPVF…ATGH), 280–300 (NITW…VGVG), 311–331 (GGVI…HAAI), 350–372 (IYLG…MFYA), and 401–421 (VVGV…FLLL). Residues 452-479 (SEEEKSPNGGSGEQSHGSGQWKAEESSE) are disordered. Phosphoserine is present on S487. The next 4 membrane-spanning stretches (helical) occupy residues 610–630 (GILI…SGCL), 648–668 (AIAA…MAVF), 676–696 (WWLL…SSAL), and 705–725 (LPVF…ATGH). An N-linked (GlcNAc...) asparagine glycan is attached at N743. 4 helical membrane-spanning segments follow: residues 774–794 (GGIF…HAAI), 813–833 (IYFG…GGMF), 842–862 (LLAI…ANML), and 864–884 (VFGL…FLLL).

This sequence belongs to the urea transporter family. Highly expressed in kidney medulla (at protein level). Also detected in testes, heart, brain and liver (at protein level). In the kidney, present in thin descending limbs of the loop of Henle and in the middle and terminal inner medullary collecting ducts. As to expression, expressed in the kidney medulla. In terms of tissue distribution, expressed in the peritubular myoid cells forming the outermost layer of the seminiferous tubules within the testes and is not detected in kidney. Expression levels are coordinated with the stage of testes development and increase 15 days postpartum, commensurate with the start of seminiferous tubule fluid movement.

Its subcellular location is the apical cell membrane. The protein resides in the basolateral cell membrane. The enzyme catalyses urea(in) = urea(out). Inhibited by phloretin. Activated by forskolin, 3-isobutyl-1-methylxanthine (IBMX) and cAMP. With respect to regulation, inhibited by phloretin. Its activity is regulated as follows. Inhibited by phloretin. Activated by forskolin, 3-isobutyl-1-methylxanthine (IBMX) and cAMP. In terms of biological role, mediates the transport of urea driven by a concentration gradient across the cell membrane of the renal inner medullary collecting duct which is critical to the urinary concentrating mechanism. Its function is as follows. Mediates the transport of urea driven by a concentration gradient across the cell membrane. Implicated in the urea movement across the blood-testis barrier and does not translocate water. The protein is Urea transporter 2 (Slc14a2) of Mus musculus (Mouse).